The chain runs to 31 residues: Cytochrome b6-f complex subunit 6 (31 aa).

The chain crosses the membrane as a helical span at residues 4-24; the sequence is IISYFGLLLATLTFTIVLFVG.

The protein belongs to the PetL family. In terms of assembly, the 4 large subunits of the cytochrome b6-f complex are cytochrome b6, subunit IV (17 kDa polypeptide, PetD), cytochrome f and the Rieske protein, while the 4 small subunits are PetG, PetL, PetM and PetN. The complex functions as a dimer.

Its subcellular location is the plastid. It localises to the chloroplast thylakoid membrane. Functionally, component of the cytochrome b6-f complex, which mediates electron transfer between photosystem II (PSII) and photosystem I (PSI), cyclic electron flow around PSI, and state transitions. PetL is important for photoautotrophic growth as well as for electron transfer efficiency and stability of the cytochrome b6-f complex. This Staurastrum punctulatum (Green alga) protein is Cytochrome b6-f complex subunit 6.